Consider the following 173-residue polypeptide: Shikimate kinase 2 (173 aa).

12-17 (GCGKTT) provides a ligand contact to ATP. 2 residues coordinate Mg(2+): threonine 16 and aspartate 32. Substrate contacts are provided by aspartate 34, arginine 58, and glycine 79. Residues 112–126 (EENPQDNQRPTLTGR) form an LID domain region. Arginine 120 lines the ATP pocket. Arginine 139 is a binding site for substrate. Glutamine 155 contacts ATP.

The protein belongs to the shikimate kinase family. AroL subfamily. Monomer. Mg(2+) is required as a cofactor.

It is found in the cytoplasm. It catalyses the reaction shikimate + ATP = 3-phosphoshikimate + ADP + H(+). Its pathway is metabolic intermediate biosynthesis; chorismate biosynthesis; chorismate from D-erythrose 4-phosphate and phosphoenolpyruvate: step 5/7. In terms of biological role, catalyzes the specific phosphorylation of the 3-hydroxyl group of shikimic acid using ATP as a cosubstrate. This is Shikimate kinase 2 from Pectobacterium carotovorum subsp. carotovorum (strain PC1).